A 480-amino-acid polypeptide reads, in one-letter code: Glutamyl-tRNA(Gln) amidotransferase subunit A (480 aa).

Active-site charge relay system residues include lysine 70 and serine 145. The active-site Acyl-ester intermediate is the serine 169.

This sequence belongs to the amidase family. GatA subfamily. As to quaternary structure, heterotrimer of A, B and C subunits.

It carries out the reaction L-glutamyl-tRNA(Gln) + L-glutamine + ATP + H2O = L-glutaminyl-tRNA(Gln) + L-glutamate + ADP + phosphate + H(+). Functionally, allows the formation of correctly charged Gln-tRNA(Gln) through the transamidation of misacylated Glu-tRNA(Gln) in organisms which lack glutaminyl-tRNA synthetase. The reaction takes place in the presence of glutamine and ATP through an activated gamma-phospho-Glu-tRNA(Gln). This is Glutamyl-tRNA(Gln) amidotransferase subunit A from Lactobacillus delbrueckii subsp. bulgaricus (strain ATCC 11842 / DSM 20081 / BCRC 10696 / JCM 1002 / NBRC 13953 / NCIMB 11778 / NCTC 12712 / WDCM 00102 / Lb 14).